Reading from the N-terminus, the 103-residue chain is MADQKIRIRLKAFDHRLIDRSASEIVETAKRTGAQVRGPIPLPTKIERYTVLVSPHVDKDARDQYETRTHKRVLDIVDPNDKTVDALMKLELAAGVDVQIKLT.

It belongs to the universal ribosomal protein uS10 family. Part of the 30S ribosomal subunit.

Its function is as follows. Involved in the binding of tRNA to the ribosomes. This chain is Small ribosomal subunit protein uS10, found in Stenotrophomonas maltophilia (strain R551-3).